Reading from the N-terminus, the 153-residue chain is Ribosome maturation factor RimP (153 aa).

This sequence belongs to the RimP family.

It is found in the cytoplasm. Functionally, required for maturation of 30S ribosomal subunits. The protein is Ribosome maturation factor RimP of Clostridium botulinum (strain Kyoto / Type A2).